Here is an 876-residue protein sequence, read N- to C-terminus: Alanine--tRNA ligase (876 aa).

Zn(2+)-binding residues include H565, H569, C667, and H671.

This sequence belongs to the class-II aminoacyl-tRNA synthetase family. The cofactor is Zn(2+).

Its subcellular location is the cytoplasm. The enzyme catalyses tRNA(Ala) + L-alanine + ATP = L-alanyl-tRNA(Ala) + AMP + diphosphate. Catalyzes the attachment of alanine to tRNA(Ala) in a two-step reaction: alanine is first activated by ATP to form Ala-AMP and then transferred to the acceptor end of tRNA(Ala). Also edits incorrectly charged Ser-tRNA(Ala) and Gly-tRNA(Ala) via its editing domain. The polypeptide is Alanine--tRNA ligase (Staphylococcus epidermidis (strain ATCC 35984 / DSM 28319 / BCRC 17069 / CCUG 31568 / BM 3577 / RP62A)).